A 326-amino-acid polypeptide reads, in one-letter code: Phosphotriesterase homology protein (326 aa).

Histidine 22, histidine 24, lysine 145, histidine 178, histidine 207, and aspartate 264 together coordinate Zn(2+). Lysine 145 is modified (N6-carboxylysine).

Belongs to the metallo-dependent hydrolases superfamily. Phosphotriesterase family. It depends on Zn(2+) as a cofactor.

This is Phosphotriesterase homology protein (php) from Mycobacterium tuberculosis (strain CDC 1551 / Oshkosh).